Consider the following 426-residue polypeptide: Serine--tRNA ligase (426 aa).

Position 231–233 (231–233 (TAE)) interacts with L-serine. Residues 262-264 (RRE) and valine 278 each bind ATP. Position 285 (glutamate 285) interacts with L-serine. 349–352 (EVSS) is a binding site for ATP. L-serine is bound at residue serine 384.

It belongs to the class-II aminoacyl-tRNA synthetase family. Type-1 seryl-tRNA synthetase subfamily. Homodimer. The tRNA molecule binds across the dimer.

It is found in the cytoplasm. It carries out the reaction tRNA(Ser) + L-serine + ATP = L-seryl-tRNA(Ser) + AMP + diphosphate + H(+). The catalysed reaction is tRNA(Sec) + L-serine + ATP = L-seryl-tRNA(Sec) + AMP + diphosphate + H(+). The protein operates within aminoacyl-tRNA biosynthesis; selenocysteinyl-tRNA(Sec) biosynthesis; L-seryl-tRNA(Sec) from L-serine and tRNA(Sec): step 1/1. Catalyzes the attachment of serine to tRNA(Ser). Is also able to aminoacylate tRNA(Sec) with serine, to form the misacylated tRNA L-seryl-tRNA(Sec), which will be further converted into selenocysteinyl-tRNA(Sec). The polypeptide is Serine--tRNA ligase (Chlamydia felis (strain Fe/C-56) (Chlamydophila felis)).